The following is a 281-amino-acid chain: Probable feruloyl esterase A (281 aa).

Residues Met1–Ala21 form the signal peptide. Intrachain disulfides connect Cys50–Cys279, Cys112–Cys115, and Cys248–Cys255. Residue Asp98 coordinates substrate. Asn100 is a glycosylation site (N-linked (GlcNAc...) asparagine). Position 101 (Tyr101) interacts with substrate. The active-site Nucleophile is Ser154. The N-linked (GlcNAc...) asparagine glycan is linked to Asn173. The Charge relay system role is filled by Asp215. Position 268 (His268) interacts with substrate. Catalysis depends on His268, which acts as the Charge relay system.

It belongs to the AB hydrolase superfamily. FaeA family.

It localises to the secreted. The enzyme catalyses feruloyl-polysaccharide + H2O = ferulate + polysaccharide.. Involved in degradation of plant cell walls. Hydrolyzes the feruloyl-arabinose ester bond in arabinoxylans, and the feruloyl-galactose ester bond in pectin. The sequence is that of Probable feruloyl esterase A (faeA) from Aspergillus terreus (strain NIH 2624 / FGSC A1156).